We begin with the raw amino-acid sequence, 129 residues long: Small ribosomal subunit protein uS9 (129 aa).

Positions 104–113 (TRDSRVVERK) are enriched in basic and acidic residues. A disordered region spans residues 104–129 (TRDSRVVERKKPGKRKARRSRQFSKR). A compositionally biased stretch (basic residues) spans 114–129 (KPGKRKARRSRQFSKR).

It belongs to the universal ribosomal protein uS9 family.

In Sulfurimonas denitrificans (strain ATCC 33889 / DSM 1251) (Thiomicrospira denitrificans (strain ATCC 33889 / DSM 1251)), this protein is Small ribosomal subunit protein uS9.